The primary structure comprises 457 residues: Phosphatidate cytidylyltransferase (457 aa).

The next 6 helical transmembrane spans lie at 71–91, 154–174, 188–208, 214–234, 255–275, and 330–350; these read VMIS…IVLI, FIVT…FVLF, GSLC…HLII, GLFW…FAYL, GFLG…RILS, and FHAL…GFFA.

It belongs to the CDS family. Homodimer. It depends on Mg(2+) as a cofactor.

Its subcellular location is the endoplasmic reticulum membrane. The protein localises to the cytoplasmic vesicle. The protein resides in the secretory vesicle. The catalysed reaction is a 1,2-diacyl-sn-glycero-3-phosphate + CTP + H(+) = a CDP-1,2-diacyl-sn-glycerol + diphosphate. It participates in phospholipid metabolism; CDP-diacylglycerol biosynthesis; CDP-diacylglycerol from sn-glycerol 3-phosphate: step 3/3. Supplies CDP-diacylglycerol, which may play an important role as both a precursor to phosphoinositide biosynthesis in the plasma membrane and as a negative effector of phosphatidylinositol 4-kinase activity, thereby exerting an effect on cell proliferation via a lipid-dependent signal transduction cascade. The sequence is that of Phosphatidate cytidylyltransferase (CDS1) from Saccharomyces cerevisiae (strain ATCC 204508 / S288c) (Baker's yeast).